The chain runs to 524 residues: Maturase K (524 aa).

The protein belongs to the intron maturase 2 family. MatK subfamily.

It localises to the plastid. It is found in the chloroplast. In terms of biological role, usually encoded in the trnK tRNA gene intron. Probably assists in splicing its own and other chloroplast group II introns. The protein is Maturase K of Welwitschia mirabilis (Tree tumbo).